Consider the following 173-residue polypeptide: Siroheme decarboxylase alpha subunit (173 aa).

The substrate site is built by His115 and Arg119.

The protein belongs to the Ahb/Nir family. In terms of assembly, forms a heterodimer composed of AhbA and AhbB.

It catalyses the reaction siroheme + 2 H(+) = 12,18-didecarboxysiroheme + 2 CO2. The protein operates within porphyrin-containing compound metabolism; protoheme biosynthesis. In terms of biological role, involved in siroheme-dependent heme b biosynthesis. Catalyzes the decarboxylation of siroheme into didecarboxysiroheme. Siroheme is decarboxylated to monodecarboxysiroheme, which is in turn decarboxylated to didecarboxysiroheme. This Desulfovibrio desulfuricans (strain ATCC 27774 / DSM 6949 / MB) protein is Siroheme decarboxylase alpha subunit.